Reading from the N-terminus, the 101-residue chain is NADH-quinone oxidoreductase subunit K (101 aa).

Helical transmembrane passes span 4–24 (LSHY…GIFL), 30–50 (IVLL…FIAF), and 61–81 (VFVF…LAIL).

Belongs to the complex I subunit 4L family. As to quaternary structure, NDH-1 is composed of 14 different subunits. Subunits NuoA, H, J, K, L, M, N constitute the membrane sector of the complex.

It localises to the cell inner membrane. The catalysed reaction is a quinone + NADH + 5 H(+)(in) = a quinol + NAD(+) + 4 H(+)(out). In terms of biological role, NDH-1 shuttles electrons from NADH, via FMN and iron-sulfur (Fe-S) centers, to quinones in the respiratory chain. The immediate electron acceptor for the enzyme in this species is believed to be ubiquinone. Couples the redox reaction to proton translocation (for every two electrons transferred, four hydrogen ions are translocated across the cytoplasmic membrane), and thus conserves the redox energy in a proton gradient. The protein is NADH-quinone oxidoreductase subunit K of Methylovorus glucosotrophus (strain SIP3-4).